Reading from the N-terminus, the 1163-residue chain is Integrin alpha-X (1163 aa).

The first 19 residues, 1–19 (MTRTRAALLLFTALATSLG), serve as a signal peptide directing secretion. Topologically, residues 20 to 1107 (FNLDTEELTA…EKYKVHNPTP (1088 aa)) are extracellular. FG-GAP repeat units lie at residues 23 to 78 (DTEE…ACEP) and 79 to 138 (IGLQ…TQRL). N-linked (GlcNAc...) asparagine glycosylation is present at Asn61. A disulfide bridge links Cys69 with Cys76. Residue Asn89 is glycosylated (N-linked (GlcNAc...) asparagine). 2 cysteine pairs are disulfide-bonded: Cys108-Cys126 and Cys116-Cys145. Asp157, Ser159, Ser161, and Asp259 together coordinate Mg(2+). The 175-residue stretch at 165–339 (RNFATMMNFV…KEKIFAIEGT (175 aa)) folds into the VWFA domain. FG-GAP repeat units lie at residues 340-391 (ETTS…PTFI), 392-443 (NMSQ…SRQW), 444-504 (RMKA…WRRW), 507-565 (DAVL…PSIS), and 570-630 (QRIA…FIPA). A glycan (N-linked (GlcNAc...) asparagine) is linked at Asn392. Asp466, Asp468, Asp470, and Asp474 together coordinate Ca(2+). A disulfide bridge links Cys495 with Cys506. Ca(2+) contacts are provided by Asp530, Asn532, Asp534, Asp538, Asp593, Asp597, and Asp601. 2 disulfides stabilise this stretch: Cys639/Cys722 and Cys655/Cys712. N-linked (GlcNAc...) asparagine glycosylation is found at Asn697 and Asn735. Disulfide bonds link Cys771–Cys777 and Cys848–Cys863. N-linked (GlcNAc...) asparagine glycosylation is found at Asn899 and Asn939. Intrachain disulfides connect Cys998–Cys1022 and Cys1027–Cys1032. The N-linked (GlcNAc...) asparagine glycan is linked to Asn1050. Residues 1108–1128 (LIVGSSIGGLLLLALITAVLY) form a helical membrane-spanning segment. The Cytoplasmic portion of the chain corresponds to 1129–1163 (KVGFFKRQYKEMMEEANGQIAPENGTQTPSPPSEK). The GFFKR motif signature appears at 1131-1135 (GFFKR).

Belongs to the integrin alpha chain family. As to quaternary structure, heterodimer of an alpha and a beta subunit. Alpha-X associates with beta-2. As to expression, predominantly expressed in monocytes and granulocytes.

It localises to the membrane. Its function is as follows. Integrin alpha-X/beta-2 is a receptor for fibrinogen. It recognizes the sequence G-P-R in fibrinogen. It mediates cell-cell interaction during inflammatory responses. It is especially important in monocyte adhesion and chemotaxis. In Homo sapiens (Human), this protein is Integrin alpha-X (ITGAX).